A 642-amino-acid chain; its full sequence is Triacylglycerol lipase 3 (642 aa).

The PNPLA domain occupies 204-392 (LILQGGSLFG…NEIEPFLNIN (189 aa)). The GXSXG motif lies at 235 to 239 (GSSMG). Serine 237 (nucleophile) is an active-site residue. The HXXXXD acyltransferase motif motif lies at 298-303 (HGYSQD). The Proton acceptor role is filled by glutamate 403. Residues 471 to 481 (RKTQRSSSQSP) are compositionally biased toward polar residues. The segment at 471 to 502 (RKTQRSSSQSPIKAGTVEDLEPEPLMSPVPPS) is disordered.

It is found in the lipid droplet. It carries out the reaction a triacylglycerol + H2O = a diacylglycerol + a fatty acid + H(+). It catalyses the reaction 1,2,3-tri-(9Z-octadecenoyl)-glycerol + H2O = di-(9Z)-octadecenoylglycerol + (9Z)-octadecenoate + H(+). The catalysed reaction is di-(9Z)-octadecenoylglycerol + H2O = (9Z-octadecenoyl)-glycerol + (9Z)-octadecenoate + H(+). The enzyme catalyses a 1-acyl-sn-glycero-3-phosphoethanolamine + (9Z)-octadecenoyl-CoA = 1-acyl-2-(9Z)-octadecenoyl-sn-glycero-3-phosphoethanolamine + CoA. It carries out the reaction a 1-acyl-sn-glycero-3-phosphoethanolamine + hexadecanoyl-CoA = 1-acyl-2-hexadecanoyl-sn-glycero-3-phosphoethanolamine + CoA. With respect to regulation, loses its lipolytic activity in cells lacking nonpolar lipids. In terms of biological role, lipid particle-localized triacylglycerol (TAG) lipase. The lipid droplet/particle is a lipid storage compartment which serves as a depot of energy and building blocks for membrane lipid biosynthesis. Involved in the mobilization of the non-polar storage lipids triacylglycerols (TAGs) from lipid particles by hydrolysis of TAGs, releasing and supplying specific fatty acids to the appropriate metabolic pathways. Also catalyzes the acylation of lysophosphatidic acid (LPA). Important for efficient sporulation, but rather through its acyltransferase than lipase activity. This chain is Triacylglycerol lipase 3 (TGL3), found in Saccharomyces cerevisiae (strain ATCC 204508 / S288c) (Baker's yeast).